Reading from the N-terminus, the 100-residue chain is Small ribosomal subunit protein uS14 (100 aa).

Belongs to the universal ribosomal protein uS14 family. As to quaternary structure, part of the 30S ribosomal subunit. Contacts proteins S3 and S10.

Functionally, binds 16S rRNA, required for the assembly of 30S particles and may also be responsible for determining the conformation of the 16S rRNA at the A site. This Synechococcus sp. (strain CC9605) protein is Small ribosomal subunit protein uS14.